The primary structure comprises 475 residues: Ankyrin repeat, SAM and basic leucine zipper domain-containing protein 1 (475 aa).

The segment covering 1-10 (MAAGRLRGLA) has biased composition (low complexity). The tract at residues 1 to 24 (MAAGRLRGLAVAGGGESSESDDDG) is disordered. Phosphoserine occurs at positions 17, 18, and 20. ANK repeat units lie at residues 45–74 (EKNE…SVDS), 78–107 (YGWT…NANF), 110–144 (DKQT…DPNV), 148–177 (RLMT…EVNT), 181–210 (SGYT…DKML), and 214–243 (DGNI…PLKG). The SAM domain occupies 272–334 (SYTAFGDLEV…KILAALKELD (63 aa)).

As to quaternary structure, interacts with DDX4, PIWIL1, RANBP9 and TDRD1.

It localises to the cytoplasm. In terms of biological role, plays a central role during spermatogenesis by repressing transposable elements and preventing their mobilization, which is essential for the germline integrity. Acts via the piRNA metabolic process, which mediates the repression of transposable elements during meiosis by forming complexes composed of piRNAs and Piwi proteins and governs the methylation and subsequent repression of transposons. Its association with pi-bodies suggests a participation in the primary piRNAs metabolic process. Required prior to the pachytene stage to facilitate the production of multiple types of piRNAs, including those associated with repeats involved in the regulation of retrotransposons. May act by mediating protein-protein interactions during germ cell maturation. This Carollia perspicillata (Seba's short-tailed bat) protein is Ankyrin repeat, SAM and basic leucine zipper domain-containing protein 1 (ASZ1).